The chain runs to 414 residues: Serine/threonine transporter SstT (414 aa).

The next 8 helical transmembrane spans lie at 16 to 36 (GSLVKQILVGLVLGILLAWIS), 46 to 66 (LGTLFVGALKAVAPVLVLMLV), 84 to 104 (ILFLYLLGTFSAALAAVVFSF), 143 to 163 (ALLNANYIGILVWAVSLGFAL), 180 to 200 (AVTFMVKLVIRFAPIGIFGLV), 219 to 239 (LVVLIGCMLLVALVVNPLLVF), 300 to 320 (MAGAAITITVLTLAAVHTLGV), and 332 to 352 (VVASLCACGASGVAGGSLLLI).

Belongs to the dicarboxylate/amino acid:cation symporter (DAACS) (TC 2.A.23) family.

It localises to the cell inner membrane. The catalysed reaction is L-serine(in) + Na(+)(in) = L-serine(out) + Na(+)(out). It catalyses the reaction L-threonine(in) + Na(+)(in) = L-threonine(out) + Na(+)(out). Involved in the import of serine and threonine into the cell, with the concomitant import of sodium (symport system). This Salmonella schwarzengrund (strain CVM19633) protein is Serine/threonine transporter SstT.